The chain runs to 72 residues: Translation initiation factor IF-1 (72 aa).

An S1-like domain is found at 1–72 (MAKDDVIEIE…TKGRITYRFK (72 aa)).

It belongs to the IF-1 family. As to quaternary structure, component of the 30S ribosomal translation pre-initiation complex which assembles on the 30S ribosome in the order IF-2 and IF-3, IF-1 and N-formylmethionyl-tRNA(fMet); mRNA recruitment can occur at any time during PIC assembly.

It localises to the cytoplasm. In terms of biological role, one of the essential components for the initiation of protein synthesis. Stabilizes the binding of IF-2 and IF-3 on the 30S subunit to which N-formylmethionyl-tRNA(fMet) subsequently binds. Helps modulate mRNA selection, yielding the 30S pre-initiation complex (PIC). Upon addition of the 50S ribosomal subunit IF-1, IF-2 and IF-3 are released leaving the mature 70S translation initiation complex. This Latilactobacillus sakei subsp. sakei (strain 23K) (Lactobacillus sakei subsp. sakei) protein is Translation initiation factor IF-1.